The primary structure comprises 299 residues: MGFVKVVKNKQYFKRYQVKFRRRREGKTDYYARKRLTFQDKNKYNTPKYRLIVRLSNKDITVQIAYARIEGDRVVCAAYSHELPKYGIQVGLTNYAAAYCTGLLVARRVLNKLGLDSLYAGCTEVTGEEFNVEPVDDGPGAFRCFLDVGLARTTTGARVFGAMKGAVDGGLNIPHSVKRFPGYSAETKSFNADVHRAHIFGQHVADYMRSLEEEDEESFKRQFSRYIKLGIRADDLEDIYKKAHQAIRNDPTHKVTAKKSSAVTKKRWNAKKLTNEQRKTKIAAHKAAYVAKLQSETEA.

This sequence belongs to the universal ribosomal protein uL18 family. In terms of assembly, component of the large ribosomal subunit (LSU). Interacts with Fmr1 to form the RNA-induced silencing complex (RISC), a ribonucleoprotein (RNP) complex involved in translation regulation, other components of the complex are Rm62, RpL11, AGO2 and Dcr-1.

It is found in the cytoplasm. The protein resides in the nucleus. Its function is as follows. Component of the ribosome, a large ribonucleoprotein complex responsible for the synthesis of proteins in the cell. The small ribosomal subunit (SSU) binds messenger RNAs (mRNAs) and translates the encoded message by selecting cognate aminoacyl-transfer RNA (tRNA) molecules. The large subunit (LSU) contains the ribosomal catalytic site termed the peptidyl transferase center (PTC), which catalyzes the formation of peptide bonds, thereby polymerizing the amino acids delivered by tRNAs into a polypeptide chain. The nascent polypeptides leave the ribosome through a tunnel in the LSU and interact with protein factors that function in enzymatic processing, targeting, and the membrane insertion of nascent chains at the exit of the ribosomal tunnel. This is Large ribosomal subunit protein uL18 (RpL5) from Drosophila melanogaster (Fruit fly).